We begin with the raw amino-acid sequence, 360 residues long: Peptide chain release factor 1 (360 aa).

At Q235 the chain carries N5-methylglutamine. The segment at 284–313 (AKRQQAEASTRRNLLGSGDRSDRNRTYNFP) is disordered.

This sequence belongs to the prokaryotic/mitochondrial release factor family. Post-translationally, methylated by PrmC. Methylation increases the termination efficiency of RF1.

The protein resides in the cytoplasm. Functionally, peptide chain release factor 1 directs the termination of translation in response to the peptide chain termination codons UAG and UAA. The polypeptide is Peptide chain release factor 1 (Salmonella gallinarum (strain 287/91 / NCTC 13346)).